Consider the following 453-residue polypeptide: Bis(5'-adenosyl)-triphosphatase ENPP4 (453 aa).

The first 18 residues, 1–18, serve as a signal peptide directing secretion; the sequence is MKLLLMLLFSGLMTGCRG. Topologically, residues 19–407 are extracellular; sequence NSSSASPPKL…DQWCINLPEA (389 aa). Asp-34 and Thr-70 together coordinate Zn(2+). Thr-70 (AMP-threonine intermediate) is an active-site residue. Substrate is bound by residues Asn-91 and Tyr-154. Asn-166 carries N-linked (GlcNAc...) asparagine glycosylation. Residues Asp-189, His-193, Asp-237, and His-238 each contribute to the Zn(2+) site. Residue Asp-189 coordinates substrate. Residues Cys-254 and Cys-287 are joined by a disulfide bond. An N-linked (GlcNAc...) asparagine glycan is attached at Asn-276. Position 336 (His-336) interacts with Zn(2+). A disulfide bond links Cys-394 and Cys-401. A helical membrane pass occupies residues 408 to 428; the sequence is IGIVIGALLVLTTLTCLIIIM. Topologically, residues 429 to 453 are cytoplasmic; the sequence is QNRVSGPRPFSRLQLQEDDDDPLIG.

It belongs to the nucleotide pyrophosphatase/phosphodiesterase family. It depends on Zn(2+) as a cofactor.

The protein localises to the cell membrane. The catalysed reaction is P(1),P(3)-bis(5'-adenosyl) triphosphate + H2O = AMP + ADP + 2 H(+). In terms of biological role, hydrolyzes extracellular Ap3A into AMP and ADP, and Ap4A into AMP and ATP. Ap3A and Ap4A are diadenosine polyphosphates thought to induce proliferation of vascular smooth muscle cells. Acts as a procoagulant, mediating platelet aggregation at the site of nascent thrombus via release of ADP from Ap3A and activation of ADP receptors. This is Bis(5'-adenosyl)-triphosphatase ENPP4 (ENPP4) from Bos taurus (Bovine).